A 447-amino-acid chain; its full sequence is MNAWEVNFDGLVGLTHHYAGLSFGNEASTRHRFQVSNPRLAAKQGLLKMKTLADAGFPQAVIPPHERPFIPVLRQLGFSGSDEQVLEKVARQAPHWLSSVSSASPMWVANAATIAPSADTLDGKVHLTVANLNNKFHRSLEAPVTESLLKAIFNDEEKFSVHSALPQVALLGDEGAANHNRLGGHYGEPGMQLFVYGREEGNDTRPSRYPARQTREASEAVARLNQVNPQQVIFAQQNPDVIDQGVFHNDVIAVSNRQVLFCHQQAFARQSQLLANLRARVNGFMAIEVPATQVSVSDAVSTYLFNSQLLSRDDGSMMLVLPQECREHAGVWGYLNELLAADNPISELKVFDLRESMANGGGPACLRLRVVLTEEERRAVNPAVMMNDTLFNALNDWVDRYYRDRLTAADLADPQLLREGREALDVLSQLLNLGSVYPFQREGGGNG.

Substrate is bound by residues 19–28 (AGLSFGNEAS), N110, and 137–138 (HR). Residue E174 is part of the active site. Position 212 (R212) interacts with substrate. H248 is a catalytic residue. Substrate contacts are provided by D250 and N359. C365 functions as the Nucleophile in the catalytic mechanism.

The protein belongs to the succinylarginine dihydrolase family. Homodimer.

It carries out the reaction N(2)-succinyl-L-arginine + 2 H2O + 2 H(+) = N(2)-succinyl-L-ornithine + 2 NH4(+) + CO2. It participates in amino-acid degradation; L-arginine degradation via AST pathway; L-glutamate and succinate from L-arginine: step 2/5. Catalyzes the hydrolysis of N(2)-succinylarginine into N(2)-succinylornithine, ammonia and CO(2). This Shigella boydii serotype 4 (strain Sb227) protein is N-succinylarginine dihydrolase.